The primary structure comprises 280 residues: Mitochondrial outer membrane protein porin 2 (280 aa).

This sequence belongs to the eukaryotic mitochondrial porin (TC 1.B.8.1) family. Expressed in roots, stems, leaves, palea, lemma and pollen.

It is found in the mitochondrion outer membrane. Forms a channel through the mitochondrial outer membrane that allows diffusion of small hydrophilic molecules. The channel adopts an open conformation at low or zero membrane potential and a closed conformation at potentials above 30-40 mV. The open state has a weak anion selectivity whereas the closed state is cation-selective. This Oryza sativa subsp. japonica (Rice) protein is Mitochondrial outer membrane protein porin 2 (VDAC2).